The sequence spans 162 residues: ATP synthase subunit b (162 aa).

A helical transmembrane segment spans residues 2-22 (LEFNATLLAQIVDFIILLIFL).

The protein belongs to the ATPase B chain family. In terms of assembly, F-type ATPases have 2 components, F(1) - the catalytic core - and F(0) - the membrane proton channel. F(1) has five subunits: alpha(3), beta(3), gamma(1), delta(1), epsilon(1). F(0) has three main subunits: a(1), b(2) and c(10-14). The alpha and beta chains form an alternating ring which encloses part of the gamma chain. F(1) is attached to F(0) by a central stalk formed by the gamma and epsilon chains, while a peripheral stalk is formed by the delta and b chains.

The protein localises to the cell membrane. F(1)F(0) ATP synthase produces ATP from ADP in the presence of a proton or sodium gradient. F-type ATPases consist of two structural domains, F(1) containing the extramembraneous catalytic core and F(0) containing the membrane proton channel, linked together by a central stalk and a peripheral stalk. During catalysis, ATP synthesis in the catalytic domain of F(1) is coupled via a rotary mechanism of the central stalk subunits to proton translocation. Functionally, component of the F(0) channel, it forms part of the peripheral stalk, linking F(1) to F(0). This is ATP synthase subunit b from Pelotomaculum thermopropionicum (strain DSM 13744 / JCM 10971 / SI).